The following is a 330-amino-acid chain: GTPase Obg (330 aa).

The region spanning 1 to 159 (MQFIDQARIT…WPLQLELKLL (159 aa)) is the Obg domain. An OBG-type G domain is found at 160–328 (AEVGIIGLPN…LLERVWKELG (169 aa)). ATP contacts are provided by residues 166 to 173 (GLPNAGKS), 191 to 195 (FTTLV), 213 to 216 (DIPG), 280 to 283 (NKQE), and 309 to 311 (SAA). S173 and T193 together coordinate Mg(2+).

It belongs to the TRAFAC class OBG-HflX-like GTPase superfamily. OBG GTPase family. As to quaternary structure, monomer. Requires Mg(2+) as cofactor.

It is found in the cytoplasm. Functionally, an essential GTPase which binds GTP, GDP and possibly (p)ppGpp with moderate affinity, with high nucleotide exchange rates and a fairly low GTP hydrolysis rate. Plays a role in control of the cell cycle, stress response, ribosome biogenesis and in those bacteria that undergo differentiation, in morphogenesis control. The sequence is that of GTPase Obg from Parasynechococcus marenigrum (strain WH8102).